We begin with the raw amino-acid sequence, 493 residues long: Ribosomal protein uS12 methylthiotransferase RimO (493 aa).

The 117-residue stretch at 5 to 121 (RTVALVTLGC…ISDRLQTILN (117 aa)) folds into the MTTase N-terminal domain. [4Fe-4S] cluster-binding residues include C14, C50, C84, C198, C202, and C205. The Radical SAM core domain occupies 184–415 (LGTSPVASVK…QLAEELTSQR (232 aa)). A TRAM domain is found at 417-487 (EERVGETLQV…GVDLVAEHHE (71 aa)).

This sequence belongs to the methylthiotransferase family. RimO subfamily. It depends on [4Fe-4S] cluster as a cofactor.

The protein localises to the cytoplasm. It carries out the reaction L-aspartate(89)-[ribosomal protein uS12]-hydrogen + (sulfur carrier)-SH + AH2 + 2 S-adenosyl-L-methionine = 3-methylsulfanyl-L-aspartate(89)-[ribosomal protein uS12]-hydrogen + (sulfur carrier)-H + 5'-deoxyadenosine + L-methionine + A + S-adenosyl-L-homocysteine + 2 H(+). Its function is as follows. Catalyzes the methylthiolation of an aspartic acid residue of ribosomal protein uS12. This is Ribosomal protein uS12 methylthiotransferase RimO from Streptomyces griseus subsp. griseus (strain JCM 4626 / CBS 651.72 / NBRC 13350 / KCC S-0626 / ISP 5235).